Here is a 242-residue protein sequence, read N- to C-terminus: Uridylate kinase (242 aa).

12 to 15 (KLSG) contacts ATP. Residues 20–25 (GEKGYG) are involved in allosteric activation by GTP. A UMP-binding site is contributed by G55. ATP-binding residues include G56 and R60. Residues D75 and 136 to 143 (TGNPYFST) contribute to the UMP site. The ATP site is built by Y169 and D172.

The protein belongs to the UMP kinase family. As to quaternary structure, homohexamer.

It localises to the cytoplasm. The catalysed reaction is UMP + ATP = UDP + ADP. It functions in the pathway pyrimidine metabolism; CTP biosynthesis via de novo pathway; UDP from UMP (UMPK route): step 1/1. Allosterically activated by GTP. Inhibited by UTP. In terms of biological role, catalyzes the reversible phosphorylation of UMP to UDP. The polypeptide is Uridylate kinase (Carboxydothermus hydrogenoformans (strain ATCC BAA-161 / DSM 6008 / Z-2901)).